Consider the following 164-residue polypeptide: F-box protein At4g05010 (164 aa).

A disordered region spans residues 38–57 (SKRAPENDSPPVKRPSHETT). The 49-residue stretch at 61–109 (RSLLETLHQDILIRVLCHVDHEDLATLKRVSKTIRKAVIEAKKSHFDYS) folds into the F-box domain.

The polypeptide is F-box protein At4g05010 (Arabidopsis thaliana (Mouse-ear cress)).